The chain runs to 263 residues: Small ribosomal subunit protein eS4 (263 aa).

The S4 RNA-binding domain maps to 42–104 (LPLIVFLRNR…TGEHFRLVYD (63 aa)).

The protein belongs to the eukaryotic ribosomal protein eS4 family.

This Pan paniscus (Pygmy chimpanzee) protein is Small ribosomal subunit protein eS4 (RPS4Y1).